A 375-amino-acid chain; its full sequence is Probable pectin lyase D (375 aa).

Positions 1–19 (MKYAAVLTTVAALASRALG) are cleaved as a signal peptide. 2 disulfides stabilise this stretch: Cys82–Cys101 and Cys91–Cys225. An N-linked (GlcNAc...) asparagine glycan is attached at Asn128. Arg255 is an active-site residue. Residues Cys321 and Cys329 are joined by a disulfide bond.

Belongs to the polysaccharide lyase 1 family.

The protein resides in the secreted. It carries out the reaction Eliminative cleavage of (1-&gt;4)-alpha-D-galacturonan methyl ester to give oligosaccharides with 4-deoxy-6-O-methyl-alpha-D-galact-4-enuronosyl groups at their non-reducing ends.. Pectinolytic enzymes consist of four classes of enzymes: pectin lyase, polygalacturonase, pectin methylesterase and rhamnogalacturonase. Among pectinolytic enzymes, pectin lyase is the most important in depolymerization of pectin, since it cleaves internal glycosidic bonds of highly methylated pectins. The chain is Probable pectin lyase D (pelD) from Aspergillus flavus (strain ATCC 200026 / FGSC A1120 / IAM 13836 / NRRL 3357 / JCM 12722 / SRRC 167).